The chain runs to 300 residues: MDWFHCNQCFRKDGAHFFVTSCGHIFCKKCVTLEKCAVCGTACKHLALSDNLKPQEKMFFKSPVETALQYFSHISQVWSFQKKQTDLLIAFYKHRITKLETAMQETQQALVSQDKELSVLRKENGELKKFLAILKESPSRYQGSRSITPRPVAITSPSQSVTPRPSFQHSSQVVSRSSSVESVPYREAGFGSLGQGGRGLQGRRTPRDSYNETPSPASTHSLSYRPSSASSGQGIFSFRPSPNGHSGHTRVLTPNNLAQRESRTTLESLPSFQLPVLQTPYQQQRQMGLPSGREAWTTSR.

An RING-type zinc finger spans residues 6–40 (CNQCFRKDGAHFFVTSCGHIFCKKCVTLEKCAVCG). Positions 88 to 124 (LIAFYKHRITKLETAMQETQQALVSQDKELSVLRKEN) form a coiled coil. 2 disordered regions span residues 141–251 (YQGS…HTRV) and 280–300 (PYQQQRQMGLPSGREAWTTSR). Over residues 155–169 (TSPSQSVTPRPSFQH) the composition is skewed to polar residues. The span at 170 to 183 (SSQVVSRSSSVESV) shows a compositional bias: low complexity. Over residues 191 to 200 (GSLGQGGRGL) the composition is skewed to gly residues. Over residues 211 to 234 (NETPSPASTHSLSYRPSSASSGQG) the composition is skewed to polar residues.

As to quaternary structure, homodimer. Post-translationally, autoubiquitinated.

The protein resides in the chromosome. The enzyme catalyses S-ubiquitinyl-[E2 ubiquitin-conjugating enzyme]-L-cysteine + [acceptor protein]-L-lysine = [E2 ubiquitin-conjugating enzyme]-L-cysteine + N(6)-ubiquitinyl-[acceptor protein]-L-lysine.. Its pathway is protein modification; protein ubiquitination. Its function is as follows. Ubiquitin E3 ligase that acts as a crucial factor for crossing-over (CO) formation during meiosis. Essential for normal prophase I progression and for ensuring appropriate CO designation in meiosis. Recruits key components of the cross-over machinery either directly ou indirectly, leading to the activation of the MutL-gamma complex. The function of RNF212B in CO designation is dependent on its catalytic activity. This chain is E3 ubiquitin-protein ligase RNF212B (RNF212B), found in Pongo abelii (Sumatran orangutan).